The primary structure comprises 407 residues: uncharacterized protein (407 aa).

This is an uncharacterized protein from Mycobacterium bovis (strain ATCC BAA-935 / AF2122/97).